The chain runs to 364 residues: MRVGLLFGGRSGEHEVSISSARAIASALSAGENASKYEILPFYIHKDGRWLAGEAPQQVLKSGAPLLESSNSSPAENNLVNSQQQTLERWQSPSQVAEVDVWFPILHGPNGEDGTIQGLLTLMQTPFVGSGVLGSALGMDKIAMKMAFEQAGLPQVKYKAVTRAQIWSNPCVFPKLCDEIEASLGYPCFVKPANLGSSVGISKVRSRQELEDALDNAANYDRRIIIEAGVAAREVECAVLGNDQPQASTVGEITFNSDFYDYETKYTAGKADLLIPAIIPDDISRQIQNMALQAFAAVDAAGLARVDFFYVEATGEVLINEINTLPGFTATSMYPQLWAHSGIPFPELVDKLVQLAIERHNPSH.

One can recognise an ATP-grasp domain in the interval 145–354; that stretch reads KMAFEQAGLP…FPELVDKLVQ (210 aa). 181–236 contributes to the ATP binding site; that stretch reads EASLGYPCFVKPANLGSSVGISKVRSRQELEDALDNAANYDRRIIIEAGVAAREVE. Positions 307, 321, and 323 each coordinate Mg(2+).

The protein belongs to the D-alanine--D-alanine ligase family. Mg(2+) is required as a cofactor. Mn(2+) serves as cofactor.

It localises to the cytoplasm. It carries out the reaction 2 D-alanine + ATP = D-alanyl-D-alanine + ADP + phosphate + H(+). Its pathway is cell wall biogenesis; peptidoglycan biosynthesis. Cell wall formation. The sequence is that of D-alanine--D-alanine ligase from Nostoc sp. (strain PCC 7120 / SAG 25.82 / UTEX 2576).